We begin with the raw amino-acid sequence, 362 residues long: MLKNKGHSSKKDNLAVNAVALQDHILRDLQLRNLSVADHSKTQVQKKENKSLKRDTKAIIDTGLKKTMQCPKLEDSEKEYVLDPKPPPLTLAQKLGLIGPPPPQLSSDEWEKVKQRSLLQGDSVQPCPICKEEFELRPQVLLSCSHVFHRACLQAFEKFTNKKTCPLCRKNQYQTRVIHGGARLFRIKCVTRIQAYWRGYVVRKWYRNLRETVPPTDAKLRKKFFEKKFTEISHRILCSYNTNIEELFAEIDRCLAINRSVLQQFEEKYGHEITEEEWEKIQVQALRRETHECSICLAPLSPAGGQRVGAGQRSRETALLSCSHVFHHACLLALEEFSVGDRPPFHACPLCRSCYQKKILES.

An RING-type 1; atypical zinc finger spans residues 127 to 169 (CPICKEEFELRPQVLLSCSHVFHRACLQAFEKFTNKKTCPLCR). Residues 186-215 (RIKCVTRIQAYWRGYVVRKWYRNLRETVPP) form the IQ domain. Residues 293–352 (CSICLAPLSPAGGQRVGAGQRSRETALLSCSHVFHHACLLALEEFSVGDRPPFHACPLCR) form an RING-type 2; atypical zinc finger.

It localises to the cytoplasm. May play a role in sperm formation. The sequence is that of RING finger protein 32 (RNF32) from Macaca fascicularis (Crab-eating macaque).